A 409-amino-acid polypeptide reads, in one-letter code: Glycosyltransferase GtfE (409 aa).

This sequence belongs to the glycosyltransferase 28 family.

The protein operates within antibiotic biosynthesis; vancomycin biosynthesis. In terms of biological role, D-glucosyltransferase that acts on the aglycone core, transferring D-glucose to the phenolic hydroxyl of OH-Phegly(4) to form a devancoaminyl-vancomycin (DVV) intermediate in the biosynthesis of glycopeptide antibiotic vancomycin. Also able to glycosylate A47934, an antibiotic with a teicoplanin-like heptapeptide, but lacking sugar residues. The polypeptide is Glycosyltransferase GtfE (gtfE) (Amycolatopsis orientalis (Nocardia orientalis)).